A 777-amino-acid chain; its full sequence is Ribosome-releasing factor 2, mitochondrial (777 aa).

The tr-type G domain maps to 68–353; that stretch reads AKIRNIGIMA…AITMYLPSPE (286 aa). GTP is bound by residues 77–84, 141–145, and 195–198; these read AHIDAGKT, DTPGH, and NKMD.

It belongs to the TRAFAC class translation factor GTPase superfamily. Classic translation factor GTPase family. EF-G/EF-2 subfamily.

The protein resides in the mitochondrion. It catalyses the reaction GTP + H2O = GDP + phosphate + H(+). Functionally, mitochondrial GTPase that mediates the disassembly of ribosomes from messenger RNA at the termination of mitochondrial protein biosynthesis. Acts in collaboration with MRRF. GTP hydrolysis follows the ribosome disassembly and probably occurs on the ribosome large subunit. Not involved in the GTP-dependent ribosomal translocation step during translation elongation. In Bos taurus (Bovine), this protein is Ribosome-releasing factor 2, mitochondrial.